Here is a 112-residue protein sequence, read N- to C-terminus: Small ribosomal subunit protein bS6c (112 aa).

This sequence belongs to the bacterial ribosomal protein bS6 family.

It is found in the plastid. The protein localises to the chloroplast. Its function is as follows. Binds together with bS18 to 16S ribosomal RNA. The protein is Small ribosomal subunit protein bS6c (rps6) of Porphyra purpurea (Red seaweed).